The sequence spans 1088 residues: PAN2-PAN3 deadenylation complex catalytic subunit pan2 (1088 aa).

WD repeat units lie at residues 16–56 (VSTC…YTQF), 136–175 (HKDK…PVNK), 178–224 (AHTG…SLVP), and 270–309 (PLTS…SFSD). Residues 309–443 (DLKLPIQLPN…EDTISGPDSI (135 aa)) form a linker region. Residues 443 to 814 (IPKFYQRPVI…IPIIVYYEKL (372 aa)) form the USP domain. The region spanning 860–1033 (VGIDSEFVAL…EDALTALKLY (174 aa)) is the Exonuclease domain. A divalent metal cation is bound by residues Asp863, Glu865, Asp972, and Asp1025.

This sequence belongs to the peptidase C19 family. PAN2 subfamily. As to quaternary structure, forms a heterotrimer with an asymmetric homodimer of the regulatory subunit ppk26/pan3 to form the poly(A)-nuclease (PAN) deadenylation complex. A divalent metal cation is required as a cofactor.

Its subcellular location is the cytoplasm. It catalyses the reaction Exonucleolytic cleavage of poly(A) to 5'-AMP.. Its activity is regulated as follows. Positively regulated by the regulatory subunit ppk26/pan3. In terms of biological role, catalytic subunit of the poly(A)-nuclease (PAN) deadenylation complex, one of two cytoplasmic mRNA deadenylases involved in mRNA turnover. PAN specifically shortens poly(A) tails of RNA and the activity is stimulated by poly(A)-binding protein pab1. PAN deadenylation is followed by rapid degradation of the shortened mRNA tails by the CCR4-NOT complex. Deadenylated mRNAs are then degraded by two alternative mechanisms, namely exosome-mediated 3'-5' exonucleolytic degradation, or deadenylation-dependent mRNA decaping and subsequent 5'-3' exonucleolytic degradation by xrn1. May also be involved in post-transcriptional maturation of mRNA poly(A) tails. This chain is PAN2-PAN3 deadenylation complex catalytic subunit pan2, found in Schizosaccharomyces pombe (strain 972 / ATCC 24843) (Fission yeast).